We begin with the raw amino-acid sequence, 126 residues long: MRHRYSGRRLNRTSAHRKAMFRNMAVSLIEHEMINTTLPKAKEFRRVAEPLITLAKEDSVANRRLVFSRLRDRKAVTKLFNELGPRYQARPGGYLRILKRGFRAGDNAPMAIVELLERPLPDSQEE.

This sequence belongs to the bacterial ribosomal protein bL17 family. In terms of assembly, part of the 50S ribosomal subunit. Contacts protein L32.

This Nitrosococcus oceani (strain ATCC 19707 / BCRC 17464 / JCM 30415 / NCIMB 11848 / C-107) protein is Large ribosomal subunit protein bL17.